Here is a 177-residue protein sequence, read N- to C-terminus: Nucleoside triphosphate/diphosphate phosphatase (177 aa).

Arg23 (proton donor) is an active-site residue. Asn87, Asp103, Asp105, Asp107, Asp120, and Glu123 together coordinate Mg(2+).

The protein belongs to the Ntdp family. Mg(2+) serves as cofactor.

The catalysed reaction is a ribonucleoside 5'-triphosphate + H2O = a ribonucleoside 5'-diphosphate + phosphate + H(+). It carries out the reaction a ribonucleoside 5'-diphosphate + H2O = a ribonucleoside 5'-phosphate + phosphate + H(+). Functionally, has nucleoside phosphatase activity towards nucleoside triphosphates and nucleoside diphosphates. The protein is Nucleoside triphosphate/diphosphate phosphatase of Streptococcus thermophilus (strain ATCC BAA-491 / LMD-9).